Reading from the N-terminus, the 185-residue chain is Phospholipase A2 inhibitor 25 kDa subunit (185 aa).

8 disulfide bridges follow: cysteine 3–cysteine 27, cysteine 6–cysteine 13, cysteine 20–cysteine 48, cysteine 54–cysteine 75, cysteine 76–cysteine 81, cysteine 101–cysteine 126, cysteine 119–cysteine 146, and cysteine 152–cysteine 172.

The protein belongs to the CNF-like-inhibitor family. In terms of assembly, heterodimer with phospholipase A2 inhibitor 31 kDa. As to expression, expressed by the liver.

It is found in the secreted. In terms of biological role, inhibits the enzymatic activity of phospholipase A2. The chain is Phospholipase A2 inhibitor 25 kDa subunit from Naja kaouthia (Monocled cobra).